The sequence spans 396 residues: Elongation factor Tu (396 aa).

The region spanning 10-206 is the tr-type G domain; that stretch reads KPHLNIGTIG…AVDENVPDPV (197 aa). The tract at residues 19-26 is G1; the sequence is GHVDHGKT. A GTP-binding site is contributed by 19–26; that stretch reads GHVDHGKT. Residue T26 coordinates Mg(2+). The segment at 62-66 is G2; that stretch reads GITIN. The segment at 83–86 is G3; sequence DAPG. GTP contacts are provided by residues 83–87 and 138–141; these read DAPGH and NKSD. Residues 138-141 are G4; that stretch reads NKSD. Residues 176–178 form a G5 region; sequence SAL.

This sequence belongs to the TRAFAC class translation factor GTPase superfamily. Classic translation factor GTPase family. EF-Tu/EF-1A subfamily. As to quaternary structure, monomer.

It localises to the cytoplasm. It catalyses the reaction GTP + H2O = GDP + phosphate + H(+). In terms of biological role, GTP hydrolase that promotes the GTP-dependent binding of aminoacyl-tRNA to the A-site of ribosomes during protein biosynthesis. This is Elongation factor Tu from Kocuria rhizophila (strain ATCC 9341 / DSM 348 / NBRC 103217 / DC2201).